Here is a 520-residue protein sequence, read N- to C-terminus: Cholesterol side-chain cleavage enzyme, mitochondrial (520 aa).

The transit peptide at methionine 1–asparagine 36 directs the protein to the mitochondrion. Cysteine 458 is a binding site for heme.

This sequence belongs to the cytochrome P450 family. In terms of assembly, interacts with FDX1/adrenodoxin. It depends on heme as a cofactor.

It is found in the mitochondrion inner membrane. It carries out the reaction 6 reduced [adrenodoxin] + cholesterol + 3 O2 + 6 H(+) = 4-methylpentanal + pregnenolone + 6 oxidized [adrenodoxin] + 4 H2O. It catalyses the reaction 2 reduced [adrenodoxin] + cholesterol + O2 + 2 H(+) = (22R)-hydroxycholesterol + 2 oxidized [adrenodoxin] + H2O. The catalysed reaction is (22R)-hydroxycholesterol + 2 reduced [adrenodoxin] + O2 + 2 H(+) = (20R,22R)-20,22-dihydroxycholesterol + 2 oxidized [adrenodoxin] + H2O. The enzyme catalyses (20R,22R)-20,22-dihydroxycholesterol + 2 reduced [adrenodoxin] + O2 + 2 H(+) = 4-methylpentanal + pregnenolone + 2 oxidized [adrenodoxin] + 2 H2O. It functions in the pathway lipid metabolism; C21-steroid hormone metabolism. Its pathway is steroid metabolism; cholesterol metabolism. Functionally, a cytochrome P450 monooxygenase that catalyzes the side-chain hydroxylation and cleavage of cholesterol to pregnenolone, the precursor of most steroid hormones. Catalyzes three sequential oxidation reactions of cholesterol, namely the hydroxylation at C22 followed with the hydroxylation at C20 to yield 20R,22R-hydroxycholesterol that is further cleaved between C20 and C22 to yield the C21-steroid pregnenolone and 4-methylpentanal. Mechanistically, uses molecular oxygen inserting one oxygen atom into a substrate and reducing the second into a water molecule. Two electrons are provided by NADPH via a two-protein mitochondrial transfer system comprising flavoprotein FDXR (adrenodoxin/ferredoxin reductase) and nonheme iron-sulfur protein FDX1 or FDX2 (adrenodoxin/ferredoxin). The polypeptide is Cholesterol side-chain cleavage enzyme, mitochondrial (CYP11A1) (Mesocricetus auratus (Golden hamster)).